The primary structure comprises 2053 residues: Nuclear pore complex protein Nup98-Nup96 (2053 aa).

5 disordered regions span residues 43-222 (GFGS…SFGA), 274-617 (YKTG…TTGS), 638-662 (QTGGLFGSTQPTTQTSLFGNTGSTG), 890-1027 (KSSS…TRDG), and 1170-1243 (PDFD…FIKR). Positions 46–55 (STAQTTQPTT) are enriched in low complexity. Residues 56 to 66 (GGFGGFGGFGG) show a composition bias toward gly residues. The span at 67-77 (ATTTQQPAASP) shows a compositional bias: low complexity. Residues 78 to 88 (FGGGGTGGSGL) are compositionally biased toward gly residues. The segment covering 111-123 (TTTTTTTQQPGAS) has biased composition (low complexity). A compositionally biased stretch (gly residues) spans 124–133 (PFGGTGGGLF). The span at 134–147 (GSSAQTTTQQQGAS) shows a compositional bias: low complexity. Positions 166-195 (ATGGFGGFGGSTTSGTQLGGGGGATSGAFG) are enriched in gly residues. Residues 196-212 (GSSSPFGGSGGATTSSP) show a composition bias toward low complexity. The segment covering 276 to 285 (TGGGSGGGNS) has biased composition (gly residues). The span at 290–299 (TPTTQPSSPF) shows a compositional bias: polar residues. The span at 300–318 (GAQTTTQTTGGLFGGQTTT) shows a compositional bias: low complexity. Positions 319 to 334 (SPFGGQTSATPGSSLF) are enriched in polar residues. Positions 335 to 346 (GSTQPTQQQTSG) are enriched in low complexity. Residues 367–378 (MPSTGGSSLFGS) show a composition bias toward polar residues. Positions 379 to 393 (TQPTQQQTGGAQPTQ) are enriched in low complexity. 2 stretches are compositionally biased toward polar residues: residues 394 to 425 (SLFGGQTQTTTSPFGSQTSTPFGQPQQTNTGS) and 459 to 488 (TQPTSGTGLFGTSPTAGGTGLFGTTQPTSQ). Residues 489-508 (GTGLFGTTQPTTQGTGLFGT) are compositionally biased toward low complexity. 2 stretches are compositionally biased toward polar residues: residues 509–536 (SPTSGTGLFGSTPTSGTGLFGSTPTSGT) and 543–555 (QPPQNQQSQTSLF). Positions 556–567 (GNTGTGATNTGT) are enriched in low complexity. Polar residues-rich tracts occupy residues 587–616 (AQPSTTTGGLFGSNQPTAQPTTSLFGNTTG) and 638–658 (QTGGLFGSTQPTTQTSLFGNT). 2 stretches are compositionally biased toward low complexity: residues 896–964 (NNNN…NNIS) and 971–998 (NNQSSSDNLNNDKSLSSSSSNKSQQQQQ). Residues 999–1015 (KEQKEEQPPKPIKEKEF) show a composition bias toward basic and acidic residues. One can recognise a Peptidase S59 domain in the interval 1025–1164 (RDGYQCVPSI…GTWVFTVKHF (140 aa)). The span at 1178–1191 (QMQQQTQQKQQQTQ) shows a compositional bias: low complexity. Polar residues predominate over residues 1192-1204 (PSKVTFQQPSTKL).

Belongs to the nucleoporin GLFG family. Nup98 interacts directly with Nup96. Autoproteolytically cleaved to yield Nup98 and Nup96 or Nup98 only, respectively.

It is found in the nucleus. The protein localises to the nuclear pore complex. The protein resides in the nucleus membrane. In terms of biological role, nup98 and Nup96 play a role in the bidirectional transport across the nucleoporin complex (NPC). The repeat domain in Nup98 has a direct role in the transport. The polypeptide is Nuclear pore complex protein Nup98-Nup96 (nup98) (Dictyostelium discoideum (Social amoeba)).